A 72-amino-acid chain; its full sequence is Translation initiation factor IF-1 (72 aa).

The S1-like domain maps to M1 to K72.

It belongs to the IF-1 family. Component of the 30S ribosomal translation pre-initiation complex which assembles on the 30S ribosome in the order IF-2 and IF-3, IF-1 and N-formylmethionyl-tRNA(fMet); mRNA recruitment can occur at any time during PIC assembly.

Its subcellular location is the cytoplasm. One of the essential components for the initiation of protein synthesis. Stabilizes the binding of IF-2 and IF-3 on the 30S subunit to which N-formylmethionyl-tRNA(fMet) subsequently binds. Helps modulate mRNA selection, yielding the 30S pre-initiation complex (PIC). Upon addition of the 50S ribosomal subunit IF-1, IF-2 and IF-3 are released leaving the mature 70S translation initiation complex. The sequence is that of Translation initiation factor IF-1 from Clostridium acetobutylicum (strain ATCC 824 / DSM 792 / JCM 1419 / IAM 19013 / LMG 5710 / NBRC 13948 / NRRL B-527 / VKM B-1787 / 2291 / W).